The following is a 568-amino-acid chain: Proline--tRNA ligase (568 aa).

Belongs to the class-II aminoacyl-tRNA synthetase family. ProS type 1 subfamily. Homodimer.

It is found in the cytoplasm. The catalysed reaction is tRNA(Pro) + L-proline + ATP = L-prolyl-tRNA(Pro) + AMP + diphosphate. In terms of biological role, catalyzes the attachment of proline to tRNA(Pro) in a two-step reaction: proline is first activated by ATP to form Pro-AMP and then transferred to the acceptor end of tRNA(Pro). As ProRS can inadvertently accommodate and process non-cognate amino acids such as alanine and cysteine, to avoid such errors it has two additional distinct editing activities against alanine. One activity is designated as 'pretransfer' editing and involves the tRNA(Pro)-independent hydrolysis of activated Ala-AMP. The other activity is designated 'posttransfer' editing and involves deacylation of mischarged Ala-tRNA(Pro). The misacylated Cys-tRNA(Pro) is not edited by ProRS. The sequence is that of Proline--tRNA ligase from Chlamydia pneumoniae (Chlamydophila pneumoniae).